The sequence spans 23 residues: U1-ctenitoxin-Co1a (23 aa).

Cysteine 10 and cysteine 20 are oxidised to a cystine.

Expressed by the venom gland.

Its subcellular location is the secreted. In terms of biological role, insecticidal neurotoxin that reversibly inhibits the N-methyl-D-aspartate (NMDA)-subtype of ionotropic glutamate receptor (GRIN) and inhibits inactivation of insect sodium channels (Nav). In vivo, is highly toxic to insects. This is U1-ctenitoxin-Co1a from Ctenus ornatus (Brazilian spider).